Here is a 92-residue protein sequence, read N- to C-terminus: Small ribosomal subunit protein uS19c (92 aa).

This sequence belongs to the universal ribosomal protein uS19 family.

The protein localises to the plastid. Its subcellular location is the chloroplast. Protein S19 forms a complex with S13 that binds strongly to the 16S ribosomal RNA. The sequence is that of Small ribosomal subunit protein uS19c (rps19) from Guillardia theta (Cryptophyte).